We begin with the raw amino-acid sequence, 686 residues long: Endonuclease GajA (686 aa).

Residues 1–423 (MYLKSLKIYN…NYVTTKNNYT (423 aa)) form an ATPase domain region. 52–56 (NCGKT) lines the ATP pocket. Positions 463-599 (FFSDAIIFVE…TSFEEAFILT (137 aa)) are toprim domain. Positions 472, 476, 559, and 604 each coordinate a divalent metal cation.

As to quaternary structure, homotetramer. Forms the core of the anti-phage defense complex. Interacts with GajB; 2 GajB dimers dock at opposite sides of the GajA complex to form a 4:4 GajA-GajB assembly (GajAB). GajAB interacts with Bacillus phage Phi3T Gad1 protein; this interaction forms a 4:4:8 GajAB-Gad1 complex and leads to GajAB inhibition. Requires Mg(2+) as cofactor.

In terms of biological role, component of antiviral defense system Gabija type II, composed of GajA and GajB. Probably a nicking endonuclease that is strongly inhibited by physiological levels of nucleotides (NTP and dNTP). Expression of Gabija type II in B.subtilis (strain BEST7003) confers resistance to phages phi105, and SpBeta. During viral replication, when nucleotides are rapidly consumed, it is de-suppressed and degrades target DNA. The chain is Endonuclease GajA from Bacillus cereus (strain HuB5-5).